A 297-amino-acid polypeptide reads, in one-letter code: Protease HtpX homolog (297 aa).

2 helical membrane-spanning segments follow: residues 14–34 (VILL…AGYL) and 39–59 (YQLG…SMIF). Residue H143 participates in Zn(2+) binding. The active site involves E144. H147 contributes to the Zn(2+) binding site. The next 2 helical transmembrane spans lie at 158-178 (IAVA…RMMW) and 193-213 (GFGA…PLAA). Residue E225 participates in Zn(2+) binding.

Belongs to the peptidase M48B family. The cofactor is Zn(2+).

Its subcellular location is the cell membrane. This chain is Protease HtpX homolog, found in Streptococcus equi subsp. equi (strain 4047).